A 154-amino-acid polypeptide reads, in one-letter code: Transcriptional repressor NrdR (154 aa).

A zinc finger spans residues cysteine 3–cysteine 34. One can recognise an ATP-cone domain in the interval leucine 46–aspartate 136.

The protein belongs to the NrdR family. It depends on Zn(2+) as a cofactor.

Its function is as follows. Negatively regulates transcription of bacterial ribonucleotide reductase nrd genes and operons by binding to NrdR-boxes. This Salinispora arenicola (strain CNS-205) protein is Transcriptional repressor NrdR.